The sequence spans 205 residues: MLITIEGIDGSGKSTLLARLRELLADLDPLFTREPGATWVGESVRRAIAERMDPITEALLFCADHAAHIDTVIRPALDEGRLVISDRYADSRFAYQPVVLDGVLPDPLSWLRRIHEGWSIRPDRTFLLVLPVEDAVSRLGPEKKREYFENAAILEQVQENYLNLAAADPLRFVVVDALLPKEEVARFIAGEIRAGARSSRRRPRA.

An ATP-binding site is contributed by 7–14; it reads GIDGSGKS.

This sequence belongs to the thymidylate kinase family.

It carries out the reaction dTMP + ATP = dTDP + ADP. This chain is Probable thymidylate kinase, found in Methanoculleus marisnigri (strain ATCC 35101 / DSM 1498 / JR1).